We begin with the raw amino-acid sequence, 449 residues long: Chromogranin-A (449 aa).

The N-terminal stretch at 1 to 18 (MRSAAVLALLLCAGQVIA) is a signal peptide. A disulfide bond links Cys35 and Cys56. A disordered region spans residues 87 to 431 (AKERTHQQKK…EDQELESLSA (345 aa)). Ser99 carries the post-translational modification Phosphoserine. A compositionally biased stretch (basic and acidic residues) spans 107–140 (VLEKPNDQAEPKEVTEEVSSKDAAEKRDDFKEVE). Residue Ser142 is modified to Phosphoserine. A glycan (O-linked (GalNAc...) serine) is linked at Ser185. At Tyr191 the chain carries Phosphotyrosine. Ser200 bears the Phosphoserine mark. Ser204 carries O-linked (GalNAc...) serine glycosylation. Ser215 is modified (phosphoserine). Basic and acidic residues predominate over residues 233–242 (EAEAREKAVP). A glycan (O-linked (GalNAc...) threonine) is linked at Thr249. Positions 279-297 (GAEEAKPPEGKGEWAHSRQ) are enriched in basic and acidic residues. Residue Ser295 is modified to Phosphoserine. Gly312 is modified (glycine amide). 3 positions are modified to phosphoserine: Ser315, Ser325, and Ser363. Residues 323 to 351 (QLSKEWEDAKRWSKMDQLAKELTAEKRLE) are compositionally biased toward basic and acidic residues. A Methionine sulfoxide modification is found at Met364. 4 positions are modified to phosphoserine: Ser390, Ser394, Ser416, and Ser430. Residues 406–423 (YPEEKKEEEGSANRRPED) show a composition bias toward basic and acidic residues. Ser416 carries an O-linked (Xyl...) (chondroitin sulfate) serine glycan.

The protein belongs to the chromogranin/secretogranin protein family. As to quaternary structure, self-interacts; self-assembly is promoted in vitro by chondroitin sulfate attachment which occurs at mildly acidic pH conditions. Interacts with SCG3. Interacts with ITPR1 in the secretory granules. In terms of processing, in secretory granules, is attacked at both N- and C-terminal sides by proteolytic enzymes generating numerous peptides of various activities. Proteolytic processing can give rise to additional longer forms of catestatin peptides which display a less potent catecholamine release-inhibitory activity. O-glycosylated; contains chondroitin sulfate (CS). CS attachment is pH-dependent, being observed at mildly acidic conditions of pH 5 but not at neutral pH, and promotes self-assembly in vitro. As to expression, highest concentration of GE-25 found in adrenal medulla with lower levels present in the pituitary, the intestinal mucosa and the pancreas. Also found in the brain.

It localises to the secreted. The protein localises to the cytoplasmic vesicle. The protein resides in the secretory vesicle. Its subcellular location is the neuronal dense core vesicle. Strongly inhibits glucose induced insulin release from the pancreas. Functionally, completely inhibits catecholamine release from chromaffin cells. Its function is as follows. Has antibacterial activity against M.luteus. Not active against E.coli. In terms of biological role, inhibits catecholamine release from chromaffin cells and noradrenergic neurons by acting as a non-competitive nicotinic cholinergic antagonist. Displays antibacterial activity against Gram-positive bacteria M.luteus and B.megaterium, and Gram-negative bacteria E.coli, and antifungal activity against a variety of filamentous fungi including A.fumigatus, N.hematococca, F.culmorum, F.oxyporum, T.mentagrophytes and several forms of Candida: C.albicans, C.tropicalis, C.glabrata and C.neoform. Can induce mast cell migration, degranulation and production of cytokines and chemokines. Has antibacterial activity against Gram-positive bacteria M.luteus, B.megaterium. Not active against Gram-positive bacteria B.cereus, B.subtilis, S.pyogenes, M.fortuitum, S.aureus and L.monocytogenes and against Gram-negative bacteria E.coli, E.cloacae, S.typhimurium, K.pneumoniae and P.aeruginosa. Possesses antifungal activity against N.crassa, A.fumigatus, A.brassicicola, N.hematococca, F.culmorum and F.oxyporum and against the yeast S.cerevisiae and C.albicans. Inactive against A.benhamiae. Functionally, has antifungal activity against N.crassa, A.fumigatus, A.brassicicola, N.hematococca, F.culmorum, F.oxyporum, A.benhamiae, C.neoformans, as well as against yeasts C.albicans, and C.tropicalis. Seems to be inactive against C.glabrata. Interacts with the fungal cell wall, crosses the plasma membrane and accumulates in fungal cells where it inhibits calcineurin activity. Its function is as follows. Regulates granule biogenesis in endocrine cells by up-regulating the transcription of protease nexin 1 (SERPINE2) via a cAMP-PKA-SP1 pathway. This leads to inhibition of granule protein degradation in the Golgi complex which in turn promotes granule formation. In Bos taurus (Bovine), this protein is Chromogranin-A (CHGA).